The sequence spans 427 residues: Histidinol dehydrogenase (427 aa).

Residues Tyr-125, Gln-186, and Asn-209 each contribute to the NAD(+) site. Substrate-binding residues include Ser-234, Gln-256, and His-259. Zn(2+) contacts are provided by Gln-256 and His-259. Catalysis depends on proton acceptor residues Glu-325 and His-326. His-326, Asp-359, Glu-413, and His-419 together coordinate substrate. Asp-359 is a Zn(2+) binding site. A Zn(2+)-binding site is contributed by His-419.

This sequence belongs to the histidinol dehydrogenase family. The cofactor is Zn(2+).

The enzyme catalyses L-histidinol + 2 NAD(+) + H2O = L-histidine + 2 NADH + 3 H(+). It functions in the pathway amino-acid biosynthesis; L-histidine biosynthesis; L-histidine from 5-phospho-alpha-D-ribose 1-diphosphate: step 9/9. Functionally, catalyzes the sequential NAD-dependent oxidations of L-histidinol to L-histidinaldehyde and then to L-histidine. The sequence is that of Histidinol dehydrogenase from Leptospira interrogans serogroup Icterohaemorrhagiae serovar Lai (strain 56601).